Here is a 284-residue protein sequence, read N- to C-terminus: MNAWNTIYDQFNPIAFSLGGIEVHWYGLAYACAIVIAFYMALRMIQKDPERFPIERKEFESYFLWAELGIVLGARIGYVLIYEPNSSYYLTHFWQIFNPFDRHGNFVGIRGMSYHGGLVGFLIASYLYSRKDLKKLLIYLDLIAISLPLGYVFGRIGNFLNQELVGRVVPKDSHLGQIIGIMVDNQLRYPSQLIEAFLEGVIVFLMVLWAKKHTKTHGLLIVVYGLGYSLMRFIAEFYREPDSQMGVYFLNLSMGQILSLFMVVVSLGILLYATRHSKKIKENQ.

7 helical membrane-spanning segments follow: residues 18–38 (LGGI…VIAF), 62–82 (YFLW…VLIY), 106–126 (FVGI…IASY), 136–156 (LLIY…FGRI), 190–210 (PSQL…VLWA), 218–238 (GLLI…AEFY), and 252–272 (LSMG…ILLY). R155 provides a ligand contact to a 1,2-diacyl-sn-glycero-3-phospho-(1'-sn-glycerol).

It belongs to the Lgt family.

The protein resides in the cell inner membrane. The catalysed reaction is L-cysteinyl-[prolipoprotein] + a 1,2-diacyl-sn-glycero-3-phospho-(1'-sn-glycerol) = an S-1,2-diacyl-sn-glyceryl-L-cysteinyl-[prolipoprotein] + sn-glycerol 1-phosphate + H(+). It participates in protein modification; lipoprotein biosynthesis (diacylglyceryl transfer). In terms of biological role, catalyzes the transfer of the diacylglyceryl group from phosphatidylglycerol to the sulfhydryl group of the N-terminal cysteine of a prolipoprotein, the first step in the formation of mature lipoproteins. This Helicobacter pylori (strain G27) protein is Phosphatidylglycerol--prolipoprotein diacylglyceryl transferase.